The sequence spans 264 residues: Thymidylate synthase (264 aa).

Arginine 21 serves as a coordination point for dUMP. Histidine 51 lines the (6R)-5,10-methylene-5,6,7,8-tetrahydrofolate pocket. Arginine 126–arginine 127 provides a ligand contact to dUMP. Catalysis depends on cysteine 146, which acts as the Nucleophile. DUMP contacts are provided by residues arginine 166 to aspartate 169, asparagine 177, and histidine 207 to tyrosine 209. Residue aspartate 169 coordinates (6R)-5,10-methylene-5,6,7,8-tetrahydrofolate. Alanine 263 is a binding site for (6R)-5,10-methylene-5,6,7,8-tetrahydrofolate.

The protein belongs to the thymidylate synthase family. Bacterial-type ThyA subfamily. Homodimer.

The protein resides in the cytoplasm. It carries out the reaction dUMP + (6R)-5,10-methylene-5,6,7,8-tetrahydrofolate = 7,8-dihydrofolate + dTMP. The protein operates within pyrimidine metabolism; dTTP biosynthesis. Catalyzes the reductive methylation of 2'-deoxyuridine-5'-monophosphate (dUMP) to 2'-deoxythymidine-5'-monophosphate (dTMP) while utilizing 5,10-methylenetetrahydrofolate (mTHF) as the methyl donor and reductant in the reaction, yielding dihydrofolate (DHF) as a by-product. This enzymatic reaction provides an intracellular de novo source of dTMP, an essential precursor for DNA biosynthesis. The chain is Thymidylate synthase from Brevibacillus brevis (strain 47 / JCM 6285 / NBRC 100599).